The sequence spans 599 residues: Endoribonuclease ZC3H12A (599 aa).

Residues 1–40 (MSGPCGEKPVLEASPTMSLWEFEDSHSRQGTPRPGQELAA) form a disordered region. Residues 42 to 87 (EASALELQMKVDFFRKLGYSSTEIHSVLQKLGVQADTNTVLGELVK) form a ubiquitin association domain region. A necessary for interaction with TANK region spans residues 81–150 (VLGELVKHGT…DGSNVAMSHG (70 aa)). The tract at residues 90-133 (TATERERQTSPDPCPQLPLVPRGGGTPKAPNLEPPLPEEEKEGS) is disordered. Position 99 is a phosphoserine (Ser99). Positions 112-297 (GGGTPKAPNL…LDNFLRKKPL (186 aa)) are RNase. An RNase NYN domain is found at 135-290 (LRPVVIDGSN…LGRHGPSLDN (156 aa)). Residues 214-220 (RRVGGKR) are RNA binding. A Mg(2+)-binding site is contributed by Asp226. Residues 301 to 324 (HRKQPCPYGRKCTYGIKCRFFHPE) form a C3H1-type zinc finger. The segment at 301–457 (HRKQPCPYGR…SELWGVRGGG (157 aa)) is necessary for interaction with ZC3H12D. The disordered stretch occupies residues 343 to 420 (LSPPRAPSKD…SGSSFGPTDW (78 aa)). The residue at position 344 (Ser344) is a Phosphoserine. Positions 358 to 375 (PSPSSQSSSLLTESEQCS) are enriched in low complexity. The span at 386–399 (SPGSRQEGLTQTYA) shows a compositional bias: polar residues. Residues Ser438 and Ser442 each carry the phosphoserine modification. A disordered region spans residues 522–546 (PPPTSVLQEPPVQSPGAGRSPWGRA).

It belongs to the ZC3H12 family. As to quaternary structure, oligomer. Found in a deubiquitination complex with TANK, USP10 and ZC3H12A; this complex inhibits genotoxic stress- or interleukin-1-beta-mediated NF-kappaB activation by promoting IKBKG or TRAF6 deubiquitination. Interacts with IKBKG; this interaction increases in response to DNA damage. Interacts with TANK; this interaction increases in response to DNA damage and serves as a bridge to anchor both TANK and USP10 into a deubiquitinating complex. Interacts with TRAF6; this interaction increases in response to DNA damage and is stimulated by TANK. Interacts with USP10; this interaction increases in response to DNA damage and serves as a bridge to anchor both TANK and USP10 into a deubiquitinating complex. Interacts with ZC3H12D. Interacts with TNRC6A. Interacts with IKBKB/IKKB. Interacts with IKBKB/IKKB. Interacts with BTRC; the interaction occurs when ZC3H12A is phosphorylated in a IKBKB/IKKB-dependent manner. Interacts with IRAK1; this interaction increases the interaction between ZC3H12A and IKBKB/IKKB. Interacts with UPF1; this interaction occurs in a mRNA translationally active- and termination-dependent manner and is essential for ZC3H12A-mediated degradation of target mRNAs. Associates with ribosomes. Interacts with ubiquitin. (Microbial infection) Oligomerization is necessary for antiviral activity. It depends on Mg(2+) as a cofactor. In terms of processing, phosphorylated by IRAK1; phosphorylation is necessary for subsequent phosphorylation by the I-kappa-B-kinase (IKK) complex. Phosphorylated by I-kappa-B-kinase (IKK) subunits IKBKB/IKKB and CHUK/IKKA at Ser-438 and Ser-442; these phosphorylations promote ubiquitin proteasome-mediated degradation of ZC3H12A and hence facilitates rapid and robust production of IL-6 mRNA in response to toll-like receptor (TLR) or IL-1 receptor stimuli. Post-translationally, (Microbial infection) Rapidly degraded in activated T-cells in response to phorbol 13-acetate 12-myristate (PMA) during HIV-1 viral infection. Ubiquitinated; ubiquitination is induced in response to interleukin IL1 receptor stimuli in a IKBKB/IKKB and IRAK1-dependent manner, leading to proteasome-mediated degradation. In terms of processing, proteolytically cleaved between Arg-111 and Arg-214 by MALT1 in activated T-cells; cleavage at Arg-111 is critical for promoting ZC3H12A degradation in response to T-cell receptor (TCR) stimulation, and hence is necessary for prolonging the stability of a set of mRNAs controlling T-cell activation and Th17 cell differentiation. As to expression, expressed in heart, placenta, spleen, kidney, liver and lung. Expressed in leukocytes. Expressed in monocyte.

It is found in the nucleus. The protein localises to the cytoplasm. It localises to the P-body. Its subcellular location is the rough endoplasmic reticulum membrane. The protein resides in the cytoplasmic granule. Functionally, endoribonuclease involved in various biological functions such as cellular inflammatory response and immune homeostasis, glial differentiation of neuroprogenitor cells, cell death of cardiomyocytes, adipogenesis and angiogenesis. Functions as an endoribonuclease involved in mRNA decay. Modulates the inflammatory response by promoting the degradation of a set of translationally active cytokine-induced inflammation-related mRNAs, such as IL6 and IL12B, during the early phase of inflammation. Prevents aberrant T-cell-mediated immune reaction by degradation of multiple mRNAs controlling T-cell activation, such as those encoding cytokines (IL6 and IL2), cell surface receptors (ICOS, TNFRSF4 and TNFR2) and transcription factor (REL). Inhibits cooperatively with ZC3H12A the differentiation of helper T cells Th17 in lungs. They repress target mRNA encoding the Th17 cell-promoting factors IL6, ICOS, REL, IRF4, NFKBID and NFKBIZ. The cooperation requires RNA-binding by RC3H1 and the nuclease activity of ZC3H12A. Together with RC3H1, destabilizes TNFRSF4/OX40 mRNA by binding to the conserved stem loop structure in its 3'UTR. Self regulates by destabilizing its own mRNA. Cleaves mRNA harboring a stem-loop (SL), often located in their 3'-UTRs, during the early phase of inflammation in a helicase UPF1-dependent manner. Plays a role in the inhibition of microRNAs (miRNAs) biogenesis. Cleaves the terminal loop of a set of precursor miRNAs (pre-miRNAs) important for the regulation of the inflammatory response leading to their degradation, and thus preventing the biosynthesis of mature miRNAs. Also plays a role in promoting angiogenesis in response to inflammatory cytokines by inhibiting the production of antiangiogenic microRNAs via its anti-dicer RNase activity. Affects the overall ubiquitination of cellular proteins. Positively regulates deubiquitinase activity promoting the cleavage at 'Lys-48'- and 'Lys-63'-linked polyubiquitin chains on TNF receptor-associated factors (TRAFs), preventing JNK and NF-kappa-B signaling pathway activation, and hence negatively regulating macrophage-mediated inflammatory response and immune homeostasis. Also induces deubiquitination of the transcription factor HIF1A, probably leading to its stabilization and nuclear import, thereby positively regulating the expression of proangiogenic HIF1A-targeted genes. Involved in a TANK-dependent negative feedback response to attenuate NF-kappaB activation through the deubiquitination of IKBKG or TRAF6 in response to interleukin-1-beta (IL1B) stimulation or upon DNA damage. Prevents stress granule (SGs) formation and promotes macrophage apoptosis under stress conditions, including arsenite-induced oxidative stress, heat shock and energy deprivation. Plays a role in the regulation of macrophage polarization; promotes IL4-induced polarization of macrophages M1 into anti-inflammatory M2 state. May also act as a transcription factor that regulates the expression of multiple genes involved in inflammatory response, angiogenesis, adipogenesis and apoptosis. Functions as a positive regulator of glial differentiation of neuroprogenitor cells through an amyloid precursor protein (APP)-dependent signaling pathway. Attenuates septic myocardial contractile dysfunction in response to lipopolysaccharide (LPS) by reducing I-kappa-B-kinase (IKK)-mediated NF-kappa-B activation, and hence myocardial pro-inflammatory cytokine production. (Microbial infection) Binds to Japanese encephalitis virus (JEV) and Dengue virus (DEN) RNAs. Its function is as follows. (Microbial infection) Exhibits antiviral activity against HIV-1 in lymphocytes by decreasing the abundance of HIV-1 viral RNA species. The sequence is that of Endoribonuclease ZC3H12A from Homo sapiens (Human).